A 1043-amino-acid polypeptide reads, in one-letter code: V(D)J recombination-activating protein 1 (1043 aa).

Residues 1–288 are interaction with importin alpha-1; that stretch reads MAASFPPTLG…LAVDFPEHFV (288 aa). A compositionally biased stretch (basic and acidic residues) spans 40-54; it reads KTPEEAQKEKKDSFE. The interval 40–80 is disordered; the sequence is KTPEEAQKEKKDSFEGKPSLEQSPAVLDKADGQKPVPTQPL. Lys234 is covalently cross-linked (Glycyl lysine isopeptide (Lys-Gly) (interchain with G-Cter in ubiquitin)). Cys269, His273, Cys293, Cys296, His298, Cys308, His310, Cys313, Cys316, Cys328, Cys331, Cys358, Cys363, His375, and His379 together coordinate Zn(2+). The RING-type zinc-finger motif lies at 293–332; sequence CQICEHILADPVETNCKHVFCRVCILRCLKVMGSYCPSCR. Residues 354–383 form an RAG1-type zinc finger; that stretch reads LMVKCPAKECNEEVSLEKYNHHISSHKESK. The segment at residues 392-459 is a DNA-binding region (NBD); that stretch reads GGRPRQHLLS…QADELEAIMQ (68 aa). A divalent metal cation-binding residues include Asp603, Asp711, and Glu965.

Belongs to the RAG1 family. Homodimer. Component of the RAG complex composed of core components RAG1 and RAG2, and associated component HMGB1 or HMGB2. Interacts with DCAF1, leading to recruitment of the CUL4A-RBX1-DDB1-DCAF1/VPRBP complex to ubiquitinate proteins and limit error-prone repair during V(D)J recombination. Requires Mg(2+) as cofactor. Mn(2+) serves as cofactor. Post-translationally, autoubiquitinated in the presence of CDC34/UBCH3. Maturing lymphoid cells.

The protein localises to the nucleus. The enzyme catalyses S-ubiquitinyl-[E2 ubiquitin-conjugating enzyme]-L-cysteine + [acceptor protein]-L-lysine = [E2 ubiquitin-conjugating enzyme]-L-cysteine + N(6)-ubiquitinyl-[acceptor protein]-L-lysine.. In terms of biological role, catalytic component of the RAG complex, a multiprotein complex that mediates the DNA cleavage phase during V(D)J recombination. V(D)J recombination assembles a diverse repertoire of immunoglobulin and T-cell receptor genes in developing B and T-lymphocytes through rearrangement of different V (variable), in some cases D (diversity), and J (joining) gene segments. In the RAG complex, RAG1 mediates the DNA-binding to the conserved recombination signal sequences (RSS) and catalyzes the DNA cleavage activities by introducing a double-strand break between the RSS and the adjacent coding segment. RAG2 is not a catalytic component but is required for all known catalytic activities. DNA cleavage occurs in 2 steps: a first nick is introduced in the top strand immediately upstream of the heptamer, generating a 3'-hydroxyl group that can attack the phosphodiester bond on the opposite strand in a direct transesterification reaction, thereby creating 4 DNA ends: 2 hairpin coding ends and 2 blunt, 5'-phosphorylated ends. The chromatin structure plays an essential role in the V(D)J recombination reactions and the presence of histone H3 trimethylated at 'Lys-4' (H3K4me3) stimulates both the nicking and haipinning steps. The RAG complex also plays a role in pre-B cell allelic exclusion, a process leading to expression of a single immunoglobulin heavy chain allele to enforce clonality and monospecific recognition by the B-cell antigen receptor (BCR) expressed on individual B-lymphocytes. The introduction of DNA breaks by the RAG complex on one immunoglobulin allele induces ATM-dependent repositioning of the other allele to pericentromeric heterochromatin, preventing accessibility to the RAG complex and recombination of the second allele. In addition to its endonuclease activity, RAG1 also acts as an E3 ubiquitin-protein ligase that mediates monoubiquitination of histone H3. Histone H3 monoubiquitination is required for the joining step of V(D)J recombination. Mediates polyubiquitination of KPNA1. The polypeptide is V(D)J recombination-activating protein 1 (RAG1) (Homo sapiens (Human)).